A 320-amino-acid chain; its full sequence is MATGTQQKENTLLHLFAGGCGGTVGAIFTCPLEVIKTRLQSSRLALRTVYYPQVHLGTISGAGMVRPTSVTPGLLQVLKSILEKEGPKSLFRGLGPNLVGVAPSRAVYFACYSKAKEQFNGIFVPNSNTVHILSAGSAAFVTNTLMNPIWMVKTRMQLERKVRGCKQMNTLQCARRVYQTEGVRGFYRGLTASYAGISETIICFAIYESLKKCLKDAPIVSSTDGAEKSSSGFFGLMAAAAVSKGCASCIAYPHEVIRTRLREEGSKYRSFVQTARLVFREEGYLAFYRGLFAQLIRQIPNTAIVLSTYEFIVYLLGERA.

3 Solcar repeats span residues 9-118 (ENTL…AKEQ), 126-213 (NSNT…LKKC), and 231-315 (SGFF…IVYL). A run of 6 helical transmembrane segments spans residues 12–32 (LLHL…TCPL), 49–65 (VYYP…AGMV), 121–141 (GIFV…AAFV), 190–210 (LTAS…YESL), 233–253 (FFGL…IAYP), and 298–318 (QIPN…LLGE).

Belongs to the mitochondrial carrier (TC 2.A.29) family.

It localises to the mitochondrion inner membrane. It carries out the reaction UTP(in) + UDP(out) = UTP(out) + UDP(in). The catalysed reaction is dUTP(out) + UTP(in) = dUTP(in) + UTP(out). The enzyme catalyses 5-methyl-UTP(out) + UTP(in) = 5-methyl-UTP(in) + UTP(out). It catalyses the reaction 5-methyl-UDP(out) + UTP(in) = 5-methyl-UDP(in) + UTP(out). It carries out the reaction UTP(in) + CTP(out) = UTP(out) + CTP(in). The catalysed reaction is CDP(out) + UTP(in) = CDP(in) + UTP(out). The enzyme catalyses dCTP(out) + UTP(in) = dCTP(in) + UTP(out). It catalyses the reaction dCDP(out) + UTP(in) = dCDP(in) + UTP(out). It carries out the reaction UTP(in) + GTP(out) = UTP(out) + GTP(in). The catalysed reaction is UTP(in) + GDP(out) = UTP(out) + GDP(in). The enzyme catalyses dGTP(out) + UTP(in) = dGTP(in) + UTP(out). It catalyses the reaction dGDP(out) + UTP(in) = dGDP(in) + UTP(out). It carries out the reaction ITP(out) + UTP(in) = ITP(in) + UTP(out). Mitochondrial transporter that imports/exports pyrimidine nucleotides into and from mitochondria. Selectively transports uridine, thymidine, guanosine, cytosine and inosine (deoxy)nucleoside di- and triphosphates by an antiport mechanism. May import (deoxy)nucleoside triphosphates in exchange for intramitochondrial (deoxy)nucleoside diphosphates, thus providing precursors necessary for de novo synthesis of mitochondrial DNA and RNA while exporting products of their catabolism. Participates in mitochondrial genome maintenance, regulation of mitochondrial membrane potential and mitochondrial respiration. Upon INS or IGF1 stimulation regulates cell growth and proliferation by controlling mitochondrial DNA replication and transcription, the ratio of mitochondria-to nuclear-encoded components of the electron transport chain resulting in control of mitochondrial ROS production. Participates in dendritic cell endocytosis and may associate with mitochondrial oxidative phosphorylation. This is Solute carrier family 25 member 33 (Slc25a33) from Mus musculus (Mouse).